The sequence spans 126 residues: Non-specific lipid-transfer protein 13 (126 aa).

Positions 1–20 (MDTHTTKLVAISLLLLLVIS) are cleaved as a signal peptide. 4 disulfide bridges follow: cysteine 36–cysteine 85, cysteine 46–cysteine 61, cysteine 62–cysteine 109, and cysteine 83–cysteine 123.

Belongs to the plant LTP family.

In terms of biological role, plant non-specific lipid-transfer proteins transfer phospholipids as well as galactolipids across membranes. May play a role in wax or cutin deposition in the cell walls of expanding epidermal cells and certain secretory tissues. This is Non-specific lipid-transfer protein 13 (LTP13) from Arabidopsis thaliana (Mouse-ear cress).